The primary structure comprises 574 residues: Streptolysin O (574 aa).

An N-terminal signal peptide occupies residues 1–36 (MKDMSNKKIFKKYSRVAGLLTAALIVGNLVTANADS). Positions 37–52 (NKQNTANTETTTTNEQ) are enriched in low complexity. Disordered stretches follow at residues 37–64 (NKQN…TTEK) and 84–111 (KEMP…HTEE). Positions 53–64 (PKPESSELTTEK) are enriched in basic and acidic residues. A run of 4 beta stranded transmembrane segments spans residues 263 to 276 (KSQI…NSKI), 283 to 292 (IDFKSISKGE), 361 to 370 (SNDVEAAFSA), and 378 to 390 (KTNG…LENS). The short motif at 532-542 (ECTGLAWEWWR) is the Conserved undecapeptide element. Residues 564–565 (TL) carry the Cholesterol binding motif.

This sequence belongs to the cholesterol-dependent cytolysin family. As to quaternary structure, homooligomeric pore complex of 35 to 50 subunits; when inserted in the host membrane.

It localises to the secreted. Its subcellular location is the host cell membrane. Functionally, a cholesterol-dependent toxin that causes cytolysis by forming pores in cholesterol containing host membranes. After binding to target membranes, the protein undergoes a major conformation change, leading to its insertion in the host membrane and formation of an oligomeric pore complex. Cholesterol is required for binding to host membranes, membrane insertion and pore formation; cholesterol binding is mediated by a Thr-Leu pair in the C-terminus. Can be reversibly inactivated by oxidation. The chain is Streptolysin O (slo) from Streptococcus dysgalactiae subsp. equisimilis (Streptococcus equisimilis).